Here is a 415-residue protein sequence, read N- to C-terminus: Putative O-antigen transporter (415 aa).

The Cytoplasmic segment spans residues 1–11 (MNTNKLSLRRN). Residues 12–32 (VIYLAVVQGSNYLLPLLTFPY) traverse the membrane as a helical segment. Residues 33–41 (LVRTLGPEN) are Periplasmic-facing. Residues 42–62 (FGIFGFCQATMLYMIMFVEYG) traverse the membrane as a helical segment. The Cytoplasmic portion of the chain corresponds to 63–83 (FNLTATQSIAKAADSKDKVTS). The helical transmembrane segment at 84–104 (IFWAVIFSKIVLIVITLIFLT) threads the bilayer. Over 105–117 (SMTLLVPEYNKHA) the chain is Periplasmic. A helical membrane pass occupies residues 118–138 (VIIWSFVPALVGNLIYPIWLF). Residues 139–173 (QGKEKMKWLTLSSILSRLAIIPLTFIFVNTKSDIA) lie on the Cytoplasmic side of the membrane. Residues 174–194 (IAGFIQSSANLVAGIIALAIV) form a helical membrane-spanning segment. Residues 195-220 (VHEGWIGKVTLSLHNVRRSLADGFHV) are Periplasmic-facing. A helical membrane pass occupies residues 221–241 (FISTSAISLYSTGIVIILGFI). The Cytoplasmic portion of the chain corresponds to 242-295 (SGPTSVGNFNAANTIRNALQGLLNPITQAIYPRISSTLVLNRVKGVILIKKSLT). A helical membrane pass occupies residues 296-316 (CLSLIGGAFSLILLLGASILV). Topologically, residues 317 to 328 (KISIGPGYDNAV) are periplasmic. The chain crosses the membrane as a helical span at residues 329 to 349 (IVLMIISPLPFLISLSNVYGI). Topologically, residues 350–362 (QVMLTHNYKKEFS) are cytoplasmic. Residues 363–383 (KILIAAGLLSLLLIFPLTTLF) form a helical membrane-spanning segment. The Periplasmic portion of the chain corresponds to 384-385 (KE). The chain crosses the membrane as a helical span at residues 386–406 (IGAAITLLATECLVTSLMLMF). Over 407 to 415 (VRNNKLLVC) the chain is Cytoplasmic.

This sequence belongs to the polysaccharide synthase family.

The protein resides in the cell inner membrane. The protein operates within bacterial outer membrane biogenesis; LPS O-antigen biosynthesis. In terms of biological role, may be involved in the translocation process of the nascent O-polysaccharide molecules and/or its ligation to lipid A core units. The sequence is that of Putative O-antigen transporter (rfbX) from Escherichia coli (strain K12).